The primary structure comprises 718 residues: Glycine--tRNA ligase beta subunit (718 aa).

Belongs to the class-II aminoacyl-tRNA synthetase family. In terms of assembly, tetramer of two alpha and two beta subunits.

The protein localises to the cytoplasm. It catalyses the reaction tRNA(Gly) + glycine + ATP = glycyl-tRNA(Gly) + AMP + diphosphate. This is Glycine--tRNA ligase beta subunit from Mesorhizobium japonicum (strain LMG 29417 / CECT 9101 / MAFF 303099) (Mesorhizobium loti (strain MAFF 303099)).